We begin with the raw amino-acid sequence, 453 residues long: Ribulose bisphosphate carboxylase large chain (453 aa).

Residues 1 to 2 (MS) constitute a propeptide that is removed on maturation. An N-acetylproline modification is found at proline 3. Lysine 14 carries the N6,N6,N6-trimethyllysine modification. Residues asparagine 123 and threonine 173 each coordinate substrate. The Proton acceptor role is filled by lysine 175. Position 177 (lysine 177) interacts with substrate. Mg(2+) is bound by residues lysine 201, aspartate 203, and glutamate 204. Lysine 201 carries the post-translational modification N6-carboxylysine. Histidine 294 functions as the Proton acceptor in the catalytic mechanism. Substrate contacts are provided by arginine 295, histidine 327, and serine 379.

The protein belongs to the RuBisCO large chain family. Type I subfamily. As to quaternary structure, heterohexadecamer of 8 large chains and 8 small chains; disulfide-linked. The disulfide link is formed within the large subunit homodimers. Mg(2+) serves as cofactor. The disulfide bond which can form in the large chain dimeric partners within the hexadecamer appears to be associated with oxidative stress and protein turnover.

The protein localises to the plastid. It localises to the chloroplast. The catalysed reaction is 2 (2R)-3-phosphoglycerate + 2 H(+) = D-ribulose 1,5-bisphosphate + CO2 + H2O. It catalyses the reaction D-ribulose 1,5-bisphosphate + O2 = 2-phosphoglycolate + (2R)-3-phosphoglycerate + 2 H(+). Its function is as follows. RuBisCO catalyzes two reactions: the carboxylation of D-ribulose 1,5-bisphosphate, the primary event in carbon dioxide fixation, as well as the oxidative fragmentation of the pentose substrate in the photorespiration process. Both reactions occur simultaneously and in competition at the same active site. The sequence is that of Ribulose bisphosphate carboxylase large chain from Galium aparine (Catchweed bedstraw).